A 161-amino-acid chain; its full sequence is Sec-independent protein translocase protein TatB (161 aa).

A helical transmembrane segment spans residues 2 to 22 (FNDIGALELVTLVVLAVLVFG). Positions 102-161 (DAVHGRDAESSSSGSSSGSSSAASGNGRVDMSKKPEKPEKPGKTDKPAADDRPPFDMDAT) are disordered. The span at 111–126 (SSSSGSSSGSSSAASG) shows a compositional bias: low complexity. Over residues 131–161 (DMSKKPEKPEKPGKTDKPAADDRPPFDMDAT) the composition is skewed to basic and acidic residues.

It belongs to the TatB family. As to quaternary structure, the Tat system comprises two distinct complexes: a TatABC complex, containing multiple copies of TatA, TatB and TatC subunits, and a separate TatA complex, containing only TatA subunits. Substrates initially bind to the TatABC complex, which probably triggers association of the separate TatA complex to form the active translocon.

It localises to the cell membrane. Functionally, part of the twin-arginine translocation (Tat) system that transports large folded proteins containing a characteristic twin-arginine motif in their signal peptide across membranes. Together with TatC, TatB is part of a receptor directly interacting with Tat signal peptides. TatB may form an oligomeric binding site that transiently accommodates folded Tat precursor proteins before their translocation. The chain is Sec-independent protein translocase protein TatB from Streptomyces coelicolor (strain ATCC BAA-471 / A3(2) / M145).